Here is a 37-residue protein sequence, read N- to C-terminus: DEEPKETCSDEMCVIYCKGEEYSTGVCDGPQKCKCSD.

Intrachain disulfides connect Cys8/Cys27, Cys13/Cys33, and Cys17/Cys35.

It belongs to the short scorpion toxin superfamily. Potassium channel inhibitor family. Alpha-KTx 11 subfamily. As to expression, expressed by the venom gland.

The protein resides in the secreted. Its function is as follows. Binds and inhibits voltage-sensitive potassium channels. Inhibits the vertebrate potassium channel Kv1.1/KCNA1 with low affinity. This Parabuthus villosus (Black hairy thick-tailed scorpion) protein is Potassium channel toxin alpha-KTx 11.2.